We begin with the raw amino-acid sequence, 158 residues long: MEPLISAPYLTTTKMSAPATLDAACIFCKIIKSEIPSFKLIETKYSYAFLDIQPTAEGHALIIPKYHGAKLHDIPDEFLTDAMPIAKRLAKAMKLDTYNVLQNNGKIAHQEVDHVHFHLIPKRDEKSGLIVGWPAQETDFDKLGKLHKELLAKLEGSD.

One can recognise an HIT domain in the interval 26–129; the sequence is IFCKIIKSEI…IPKRDEKSGL (104 aa). AMP contacts are provided by residues 51 to 52, Asn-103, 109 to 111, and 116 to 118; these read DI, HQE, and HFH. The Histidine triad motif motif lies at 114 to 118; sequence HVHFH. Catalysis depends on His-116, which acts as the Tele-AMP-histidine intermediate.

Belongs to the HINT family. In terms of assembly, homodimer. Interacts with KIN28. Mg(2+) is required as a cofactor.

The enzyme catalyses adenosine 5'-phosphoramidate + H2O = AMP + NH4(+). Functionally, hydrolyzes adenosine 5'-monophosphoramidate substrates such as AMP-morpholidate, AMP-N-alanine methyl ester, AMP-alpha-acetyl lysine methyl ester and AMP-NH2. Plays a role in the regulation of kinase KIN28 function. Essential for growth on galactose media at elevated temperatures. This is Adenosine 5'-monophosphoramidase HNT1 from Saccharomyces cerevisiae (strain ATCC 204508 / S288c) (Baker's yeast).